The sequence spans 125 residues: Aspartate 1-decarboxylase (125 aa).

Ser25 functions as the Schiff-base intermediate with substrate; via pyruvic acid in the catalytic mechanism. Ser25 carries the pyruvic acid (Ser) modification. Thr57 contributes to the substrate binding site. Residue Tyr58 is the Proton donor of the active site. 73–75 (GAA) is a substrate binding site.

This sequence belongs to the PanD family. Heterooctamer of four alpha and four beta subunits. It depends on pyruvate as a cofactor. Post-translationally, is synthesized initially as an inactive proenzyme, which is activated by self-cleavage at a specific serine bond to produce a beta-subunit with a hydroxyl group at its C-terminus and an alpha-subunit with a pyruvoyl group at its N-terminus.

The protein resides in the cytoplasm. It catalyses the reaction L-aspartate + H(+) = beta-alanine + CO2. The protein operates within cofactor biosynthesis; (R)-pantothenate biosynthesis; beta-alanine from L-aspartate: step 1/1. In terms of biological role, catalyzes the pyruvoyl-dependent decarboxylation of aspartate to produce beta-alanine. In Herpetosiphon aurantiacus (strain ATCC 23779 / DSM 785 / 114-95), this protein is Aspartate 1-decarboxylase.